The primary structure comprises 205 residues: Protein GrpE (205 aa).

The disordered stretch occupies residues 1–40 (MSRKLHEEELTPEGMDAAQNADPAGDPVSENEGALPAAEP).

It belongs to the GrpE family. As to quaternary structure, homodimer.

The protein localises to the cytoplasm. In terms of biological role, participates actively in the response to hyperosmotic and heat shock by preventing the aggregation of stress-denatured proteins, in association with DnaK and GrpE. It is the nucleotide exchange factor for DnaK and may function as a thermosensor. Unfolded proteins bind initially to DnaJ; upon interaction with the DnaJ-bound protein, DnaK hydrolyzes its bound ATP, resulting in the formation of a stable complex. GrpE releases ADP from DnaK; ATP binding to DnaK triggers the release of the substrate protein, thus completing the reaction cycle. Several rounds of ATP-dependent interactions between DnaJ, DnaK and GrpE are required for fully efficient folding. In Acidobacterium capsulatum (strain ATCC 51196 / DSM 11244 / BCRC 80197 / JCM 7670 / NBRC 15755 / NCIMB 13165 / 161), this protein is Protein GrpE.